The primary structure comprises 155 residues: Endoribonuclease YbeY (155 aa).

Residues H114, H118, and H124 each contribute to the Zn(2+) site.

It belongs to the endoribonuclease YbeY family. It depends on Zn(2+) as a cofactor.

Its subcellular location is the cytoplasm. Its function is as follows. Single strand-specific metallo-endoribonuclease involved in late-stage 70S ribosome quality control and in maturation of the 3' terminus of the 16S rRNA. The chain is Endoribonuclease YbeY from Photorhabdus laumondii subsp. laumondii (strain DSM 15139 / CIP 105565 / TT01) (Photorhabdus luminescens subsp. laumondii).